The chain runs to 334 residues: Anthranilate phosphoribosyltransferase (334 aa).

Residues Gly-79, 82–83 (GD), Ser-87, 89–92 (NIST), 107–115 (KHGNRSISS), and Ser-119 contribute to the 5-phospho-alpha-D-ribose 1-diphosphate site. Residue Gly-79 participates in anthranilate binding. Ser-91 contacts Mg(2+). Asn-110 is a binding site for anthranilate. Arg-165 is an anthranilate binding site. Mg(2+) is bound by residues Asp-224 and Glu-225.

This sequence belongs to the anthranilate phosphoribosyltransferase family. In terms of assembly, homodimer. Requires Mg(2+) as cofactor.

It catalyses the reaction N-(5-phospho-beta-D-ribosyl)anthranilate + diphosphate = 5-phospho-alpha-D-ribose 1-diphosphate + anthranilate. Its pathway is amino-acid biosynthesis; L-tryptophan biosynthesis; L-tryptophan from chorismate: step 2/5. In terms of biological role, catalyzes the transfer of the phosphoribosyl group of 5-phosphorylribose-1-pyrophosphate (PRPP) to anthranilate to yield N-(5'-phosphoribosyl)-anthranilate (PRA). The polypeptide is Anthranilate phosphoribosyltransferase (Streptococcus pneumoniae serotype 19F (strain G54)).